The chain runs to 287 residues: Glutamate racemase (287 aa).

Over residues 1 to 15 the composition is skewed to polar residues; it reads MATKPQDANTTSREA. The tract at residues 1 to 25 is disordered; sequence MATKPQDANTTSREAITSKADSPPR. Substrate-binding positions include 32–33 and 64–65; these read DS and YG. The active-site Proton donor/acceptor is Cys-96. 97 to 98 is a substrate binding site; sequence NT. Cys-208 serves as the catalytic Proton donor/acceptor. Position 209–210 (209–210) interacts with substrate; sequence TH.

The protein belongs to the aspartate/glutamate racemases family.

It carries out the reaction L-glutamate = D-glutamate. It functions in the pathway cell wall biogenesis; peptidoglycan biosynthesis. Provides the (R)-glutamate required for cell wall biosynthesis. In Yersinia pseudotuberculosis serotype IB (strain PB1/+), this protein is Glutamate racemase.